A 455-amino-acid polypeptide reads, in one-letter code: Glutamyl-tRNA(Gln) amidotransferase subunit A (455 aa).

Active-site charge relay system residues include lysine 74 and serine 149. Serine 173 acts as the Acyl-ester intermediate in catalysis.

The protein belongs to the amidase family. GatA subfamily. Heterotrimer of A, B and C subunits.

The enzyme catalyses L-glutamyl-tRNA(Gln) + L-glutamine + ATP + H2O = L-glutaminyl-tRNA(Gln) + L-glutamate + ADP + phosphate + H(+). Allows the formation of correctly charged Gln-tRNA(Gln) through the transamidation of misacylated Glu-tRNA(Gln) in organisms which lack glutaminyl-tRNA synthetase. The reaction takes place in the presence of glutamine and ATP through an activated gamma-phospho-Glu-tRNA(Gln). This chain is Glutamyl-tRNA(Gln) amidotransferase subunit A, found in Methanosphaera stadtmanae (strain ATCC 43021 / DSM 3091 / JCM 11832 / MCB-3).